We begin with the raw amino-acid sequence, 384 residues long: 8-amino-7-oxononanoate synthase (384 aa).

R23 lines the substrate pocket. A pyridoxal 5'-phosphate-binding site is contributed by G110–F111. Substrate is bound at residue H135. 3 residues coordinate pyridoxal 5'-phosphate: S179, H206, and T232. Position 235 is an N6-(pyridoxal phosphate)lysine (K235). Residue T348 participates in substrate binding.

The protein belongs to the class-II pyridoxal-phosphate-dependent aminotransferase family. BioF subfamily. In terms of assembly, homodimer. It depends on pyridoxal 5'-phosphate as a cofactor.

The catalysed reaction is 6-carboxyhexanoyl-[ACP] + L-alanine + H(+) = (8S)-8-amino-7-oxononanoate + holo-[ACP] + CO2. It functions in the pathway cofactor biosynthesis; biotin biosynthesis. In terms of biological role, catalyzes the decarboxylative condensation of pimeloyl-[acyl-carrier protein] and L-alanine to produce 8-amino-7-oxononanoate (AON), [acyl-carrier protein], and carbon dioxide. The polypeptide is 8-amino-7-oxononanoate synthase (Vibrio cholerae serotype O1 (strain ATCC 39315 / El Tor Inaba N16961)).